The primary structure comprises 197 residues: Xanthine phosphoribosyltransferase (197 aa).

Xanthine contacts are provided by L20 and N27. 128–132 (ANGQA) is a binding site for 5-phospho-alpha-D-ribose 1-diphosphate. K156 lines the xanthine pocket.

It belongs to the purine/pyrimidine phosphoribosyltransferase family. Xpt subfamily. In terms of assembly, homodimer.

It localises to the cytoplasm. The enzyme catalyses XMP + diphosphate = xanthine + 5-phospho-alpha-D-ribose 1-diphosphate. The protein operates within purine metabolism; XMP biosynthesis via salvage pathway; XMP from xanthine: step 1/1. In terms of biological role, converts the preformed base xanthine, a product of nucleic acid breakdown, to xanthosine 5'-monophosphate (XMP), so it can be reused for RNA or DNA synthesis. This is Xanthine phosphoribosyltransferase from Bacillus cereus (strain G9842).